A 441-amino-acid chain; its full sequence is Cortexillin-2 (441 aa).

An actin-binding region spans residues 1–229 (MDLNKEWEKV…VLYTSLFFHA (229 aa)). Calponin-homology (CH) domains are found at residues 9–117 (KVQE…RKYR) and 126–231 (KSSE…HAFR). Coiled coils occupy residues 229–362 (AFRA…RLGL) and 406–430 (SFEE…KYLN).

This sequence belongs to the cortexillin family. Homodimer; parallel.

It is found in the cytoplasm. It localises to the cytoskeleton. In terms of biological role, actin-bundling protein. When linked to F-actin the actin filaments form preferentially anti-parallel bundles that associate into meshworks. Plays a major role in cytokinesis. Negatively regulates cortical localization of rapgap1. The sequence is that of Cortexillin-2 (ctxB) from Dictyostelium discoideum (Social amoeba).